Reading from the N-terminus, the 550-residue chain is Hydroxylamine reductase (550 aa).

Residues Cys-3, Cys-6, Cys-18, and Cys-25 each coordinate [2Fe-2S] cluster. 8 residues coordinate hybrid [4Fe-2O-2S] cluster: His-249, Glu-273, Cys-317, Cys-405, Cys-433, Cys-458, Glu-492, and Lys-494. The residue at position 405 (Cys-405) is a Cysteine persulfide.

The protein belongs to the HCP family. It depends on [2Fe-2S] cluster as a cofactor. Requires hybrid [4Fe-2O-2S] cluster as cofactor.

It localises to the cytoplasm. The catalysed reaction is A + NH4(+) + H2O = hydroxylamine + AH2 + H(+). Catalyzes the reduction of hydroxylamine to form NH(3) and H(2)O. This chain is Hydroxylamine reductase, found in Enterobacter sp. (strain 638).